Reading from the N-terminus, the 448-residue chain is MSFPQLGYQYIRPLYPSDRQSVGVTRSGTELSPAGTLSNVLSSVYGAPYAAAAAAQAYGAFLPYSAELPIFPQLGSQYDMKDSPGVQHAAFSHPHPAFYPYGQYQFGDPSRPKNATRESTSTLKAWLNEHRKNPYPTKGEKIMLAIITKMTLTQVSTWFANARRRLKKENKMTWAPRSRTDEEGNAYGSDHEEDKHEDEEEIDLENIDTEDIESKEDLDDPDTDIHSDSKTDTRSDSEVSDGFEDLNVPEDRLLKSVVGQRQLLNEEPQDKCALSSDAKVPQPACEQIKLNRLPPSPPQENNMPVAHKPKIWSLAETATTPDNPRNSPNTGGSVNTQNLIAQHRLIASPGSRFQGWTGRAFSAQQLSLLNSAHFLQGLGVSHTAPCSGNASFPKAAESKCSTNSLTDRPSTVDIEKTIPVLNTAFQPVQRRSQNHLDAAMILSALSSS.

Positions 108 to 170 (DPSRPKNATR…NARRRLKKEN (63 aa)) form a DNA-binding region, homeobox; TALE-type. A disordered region spans residues 171–247 (KMTWAPRSRT…EVSDGFEDLN (77 aa)). The segment covering 195–222 (KHEDEEEIDLENIDTEDIESKEDLDDPD) has biased composition (acidic residues). Residues 223–237 (TDIHSDSKTDTRSDS) are compositionally biased toward basic and acidic residues. Positions 238 to 247 (EVSDGFEDLN) are enriched in acidic residues.

The protein belongs to the TALE/IRO homeobox family. As to expression, primarily expressed in the developing central nervous system (CNS). At gastrula stage, expressed in both the superficial and deep layers of the presumptive neural plate with expression spreading to the prospective hindbrain, spinal cord and midbrain-hindbrain junction as neurulation proceeds. Not expressed in the anterior neural plate and CNS expression in the tadpole excludes the forebrain. Outside of the CNS, expressed around the closing blastopore at early gastrula stages and as gastrulation proceeds, expression switches to the anterior lateral plate mesoderm. In tadpoles, expressed in the ectodermal layer of the branchial arches, and in the otic vesicle. Also expressed in specific and overlapping dynamic patterns with irx1 and irx2 during pronephric kidney development. Renal expression begins before segment-specific terminal differentiation in the pronephric anlage at mid-neurula stage, and is later found in proximal tubule PT3 as well as intermediate tubule segments IT1 and IT2, with expression in the kidney being maintained through to the tadpole stage.

It localises to the nucleus. Its function is as follows. Acts partially redundantly with other irx members in neural patterning. Required for formation of the posterior forebrain, midbrain, hindbrain, and to a lesser extent, spinal cord. Both up-regulates and down-regulates gene expression during neural development. Acts early in neural plate development to induce proneural gene expression and specify a neural precursor state. Also up-regulates repressors that prevent neuronal differentiation. Required during at least two stages of pronephros kidney development; during neurula stages, maintains transcription of key renal genes to define the size and identity of the pronephric anlage, probably in part through regulation of bmp-signaling. Subsequently required for proper formation of the intermediate tubule segment of the pronephros. The sequence is that of Iroquois-class homeodomain protein irx-3 (irx3) from Xenopus laevis (African clawed frog).